A 338-amino-acid polypeptide reads, in one-letter code: Lipoate-protein ligase A (338 aa).

The 188-residue stretch at 29 to 216 (PATQRVLFLW…AFFAHYGERV (188 aa)) folds into the BPL/LPL catalytic domain. Residues R71, 76 to 79 (GAVF), and K134 each bind ATP. K134 contributes to the (R)-lipoate binding site.

The protein belongs to the LplA family. As to quaternary structure, monomer.

It localises to the cytoplasm. The enzyme catalyses L-lysyl-[lipoyl-carrier protein] + (R)-lipoate + ATP = N(6)-[(R)-lipoyl]-L-lysyl-[lipoyl-carrier protein] + AMP + diphosphate + H(+). It participates in protein modification; protein lipoylation via exogenous pathway; protein N(6)-(lipoyl)lysine from lipoate: step 1/2. Its pathway is protein modification; protein lipoylation via exogenous pathway; protein N(6)-(lipoyl)lysine from lipoate: step 2/2. Functionally, catalyzes both the ATP-dependent activation of exogenously supplied lipoate to lipoyl-AMP and the transfer of the activated lipoyl onto the lipoyl domains of lipoate-dependent enzymes. This Escherichia fergusonii (strain ATCC 35469 / DSM 13698 / CCUG 18766 / IAM 14443 / JCM 21226 / LMG 7866 / NBRC 102419 / NCTC 12128 / CDC 0568-73) protein is Lipoate-protein ligase A.